Reading from the N-terminus, the 341-residue chain is Major histocompatibility complex class I-related protein 1 (341 aa).

The first 18 residues, 1 to 18, serve as a signal peptide directing secretion; it reads MMLLLPLLAVFLVKRSHT. An alpha-1 region spans residues 19–105; sequence RTHSLRYFRL…RHLQRHYNHS (87 aa). The tract at residues 19-197 is antigen-binding cleft; that stretch reads RTHSLRYFRL…EYGRDTLERT (179 aa). The Extracellular segment spans residues 19-296; sequence RTHSLRYFRL…APRESGDILR (278 aa). The 8-(9H-purin-6-yl)-2-oxa-8-azabicyclo[3.3.1]nona-3,6-diene-4,6-dicarbaldehyde site is built by Y25 and R27. R27, S42, and K61 together coordinate 5-(2-oxoethylideneamino)-6-(D-ribitylamino)uracil. 5-(2-oxopropylideneamino)-6-(D-ribitylamino)uracil-binding residues include R27, S42, and K61. 7-hydroxy-6-methyl-8-(1-D-ribityl)lumazine-binding residues include R27, S42, and K61. 2 residues coordinate 8-(9H-purin-6-yl)-2-oxa-8-azabicyclo[3.3.1]nona-3,6-diene-4,6-dicarbaldehyde: K61 and H76. K61 contacts 2-amino-4-oxopteridine-6-carbaldehyde. K61 is a binding site for pyridoxal. An N-linked (GlcNAc...) asparagine glycan is attached at N103. The segment at 106 to 197 is alpha-2; it reads GLHTYQRMIG…EYGRDTLERT (92 aa). 8-(9H-purin-6-yl)-2-oxa-8-azabicyclo[3.3.1]nona-3,6-diene-4,6-dicarbaldehyde is bound at residue R112. 5-(2-oxoethylideneamino)-6-(D-ribitylamino)uracil contacts are provided by R112, Y170, and Q171. 5-(2-oxopropylideneamino)-6-(D-ribitylamino)uracil-binding residues include R112, Y170, and Q171. R112, Y170, and Q171 together coordinate 7-hydroxy-6-methyl-8-(1-D-ribityl)lumazine. 2 cysteine pairs are disulfide-bonded: C116–C179 and C218–C274. Positions 198 to 289 are alpha-3; that stretch reads EHPVVRTTRK…GRQMVLEAPR (92 aa). Residues 200-301 form the Ig-like C1-type domain; the sequence is PVVRTTRKET…GDILRVSTIS (102 aa). The connecting peptide stretch occupies residues 290–296; that stretch reads ESGDILR. The chain crosses the membrane as a helical span at residues 297 to 317; it reads VSTISGTTILIIALAGVGVLI. Residues 318-341 are Cytoplasmic-facing; the sequence is WRRSQELKEVMYQPTQVNEGSSPS.

Belongs to the MHC class I family. As to quaternary structure, heterotrimer that consists of MR1, B2M and metabolite antigen. Major classes of metabolite ligands presented by MR1 include riboflavin-related antigens, pyrimidines and ribityl lumazines, nucleobase adducts and folate derivatives. Forms reversible covalent Schiff base complexes with microbial pyrimidine-based metabolite, which serves as a molecular switch triggering complete folding, stable association with B2M and translocation of the ternary complex from endoplasmic reticulum to the plasma membrane. Alternatively, forms non-Schiff base complexes with ribityl lumazines. On antigen-presenting cells, the ternary complex interacts with TCR on MR1-restricted CD4- or CD8-positive T cell subsets. Interacts with TAPBP and TAPBPL chaperones in the endoplasmic reticulum. TAPBP associated or not with MHC class I peptide loading complex binds ligand-free MR1 or MR1-B2M complex, providing for stable MR1 pools ready for metabolite antigen processing. TAPBPL interacts with MR1 in a ligand-independent way; this interaction may stabilize MR1 pool and facilitate ligand loading and dissociation. Structurally, MR1-B2M heterodimer adopts a topology similar to classical MHC class I molecules, with alpha-1 and alpha-2 domains of MR1 forming the antigen-binding cleft composed of two alpha-helices resting on a floor of 7-stranded anti-parallel beta-pleated sheet. In terms of processing, N-glycosylated. In terms of tissue distribution, highly expressed thymus. Expressed in liver, kidney, spleen, heart, brain, lung, skeletal muscle and testis.

The protein localises to the cell membrane. Its subcellular location is the endoplasmic reticulum membrane. It is found in the golgi apparatus membrane. The protein resides in the early endosome membrane. It localises to the late endosome membrane. Functionally, antigen-presenting molecule specialized in displaying microbial pyrimidine-based metabolites to alpha-beta T cell receptors (TCR) on innate-type mucosal-associated invariant T (MAIT) cells. In complex with B2M preferentially presents riboflavin-derived metabolites to semi-invariant TRAV1 TCRs on MAIT cells, guiding immune surveillance of the microbial metabolome at mucosal epithelial barriers. Signature pyrimidine-based microbial antigens are generated via non-enzymatic condensation of metabolite intermediates of the riboflavin pathway with by-products arising from other metabolic pathways such as glycolysis. Typical potent antigenic metabolites are 5-(2-oxoethylideneamino)-6-D-ribitylaminouracil (5-OE-RU) and 5-(2-oxopropylideneamino)-6-D-ribitylaminouracil (5-OP-RU), products of condensation of 5-amino-6-D-ribityaminouracil (5-A-RU) with glyoxal or methylglyoxal by-products, respectively. May present microbial antigens to various TRAV1-negative MAIT cell subsets, providing for unique recognition of diverse microbes, including pathogens that do not synthesize riboflavin. Upon antigen recognition, elicits rapid innate-type MAIT cell activation to eliminate pathogenic microbes by directly killing infected cells. During T cell development, drives thymic selection and post-thymic terminal differentiation of MAIT cells in a process dependent on commensal microflora. Acts as an immune sensor of cancer cell metabolome. May present a tumor-specific or -associated metabolite essential for cancer cell survival to a pan-cancer TCR on a non-MAIT CD8-positive T cell clone, triggering T cell-mediated killing of a wide range of cancer cell types. May present tumor-enriched pyridoxal and pyridoxal 5'-phosphate antigens, enabling preferential recognition of cancer cells. Presents nucleobase carbonyl adducts generated during oxidative stress. Captures M3Ade, a nucleobase adduct composed of one adenine modified by a malondialdehyde trimer, for recognition by MR1-restricted T cell clones expressing a polyclonal TCR repertoire. The sequence is that of Major histocompatibility complex class I-related protein 1 from Mus musculus (Mouse).